Here is a 515-residue protein sequence, read N- to C-terminus: Glucose-6-phosphate 1-dehydrogenase (515 aa).

A2 is modified (N-acetylalanine). S8 bears the Phosphoserine mark. Position 10 is a phosphothreonine (T10). 38–45 (GASGDLAK) provides a ligand contact to NADP(+). Residue K89 is modified to N6-acetyllysine. NADP(+)-binding residues include Y147 and K171. D-glucose 6-phosphate contacts are provided by residues K171, 201 to 205 (HYLGK), E239, and E258. Residue K171 is modified to N6-(2-hydroxyisobutyryl)lysine; alternate. Residue K171 is modified to N6-acetyllysine; alternate. R357 provides a ligand contact to NADP(+). Residues K360 and R365 each contribute to the D-glucose 6-phosphate site. Residues K366, R370, and R393 each coordinate NADP(+). Q395 serves as a coordination point for D-glucose 6-phosphate. NADP(+) contacts are provided by residues 401–403 (YTK) and 421–423 (DLT). K403 is modified (N6-acetyllysine). Position 432 is an N6-acetyllysine (K432). Residue R487 participates in NADP(+) binding. The residue at position 497 (K497) is an N6-acetyllysine. Residues Y503 and W509 each coordinate NADP(+). Y503 is modified (phosphotyrosine).

It belongs to the glucose-6-phosphate dehydrogenase family. In terms of assembly, homotetramer; dimer of dimers. Interacts with SIRT2; the interaction is enhanced by H(2)O(2) treatment. Forms a ternary complex with ALDOB and TP53; this interaction is direct. ALDOB stabilizes the complex inhibiting G6PD activity and keeping oxidative pentose phosphate metabolism in check. Post-translationally, acetylated by ELP3 at Lys-403; acetylation inhibits its homodimerization and enzyme activity. Deacetylated by SIRT2 at Lys-403; deacetylation stimulates its enzyme activity.

It is found in the cytoplasm. Its subcellular location is the cytosol. The protein localises to the membrane. It catalyses the reaction D-glucose 6-phosphate + NADP(+) = 6-phospho-D-glucono-1,5-lactone + NADPH + H(+). Its pathway is carbohydrate degradation; pentose phosphate pathway; D-ribulose 5-phosphate from D-glucose 6-phosphate (oxidative stage): step 1/3. Its function is as follows. Cytosolic glucose-6-phosphate dehydrogenase that catalyzes the first and rate-limiting step of the oxidative branch within the pentose phosphate pathway/shunt, an alternative route to glycolysis for the dissimilation of carbohydrates and a major source of reducing power and metabolic intermediates for fatty acid and nucleic acid biosynthetic processes. This is Glucose-6-phosphate 1-dehydrogenase (G6PD) from Bos indicus (Zebu).